A 224-amino-acid chain; its full sequence is Urease accessory protein UreF (224 aa).

It belongs to the UreF family. In terms of assembly, ureD, UreF and UreG form a complex that acts as a GTP-hydrolysis-dependent molecular chaperone, activating the urease apoprotein by helping to assemble the nickel containing metallocenter of UreC. The UreE protein probably delivers the nickel.

The protein localises to the cytoplasm. In terms of biological role, required for maturation of urease via the functional incorporation of the urease nickel metallocenter. The chain is Urease accessory protein UreF from Pseudomonas putida (strain ATCC 47054 / DSM 6125 / CFBP 8728 / NCIMB 11950 / KT2440).